Here is a 357-residue protein sequence, read N- to C-terminus: GTPase Obg (357 aa).

The Obg domain maps to 1-159 (MKFVDEAEIQ…RTLKLELKLL (159 aa)). Positions 160–343 (ADIGMLGFPN…IMKSAMTLFE (184 aa)) constitute an OBG-type G domain. Residues 166–173 (GFPNVGKS), 191–195 (FTTLY), 213–216 (DVPG), 293–296 (NKAD), and 324–326 (SAV) contribute to the GTP site. Mg(2+)-binding residues include Ser-173 and Thr-193.

The protein belongs to the TRAFAC class OBG-HflX-like GTPase superfamily. OBG GTPase family. Monomer. It depends on Mg(2+) as a cofactor.

It localises to the cytoplasm. An essential GTPase which binds GTP, GDP and possibly (p)ppGpp with moderate affinity, with high nucleotide exchange rates and a fairly low GTP hydrolysis rate. Plays a role in control of the cell cycle, stress response, ribosome biogenesis and in those bacteria that undergo differentiation, in morphogenesis control. The chain is GTPase Obg from Xylella fastidiosa (strain M23).